Reading from the N-terminus, the 387-residue chain is 3-hydroxy-D-aspartate aldolase (387 aa).

At Lys-62 the chain carries N6-(pyridoxal phosphate)lysine. Pyridoxal 5'-phosphate-binding positions include Gln-85, Thr-238, 256–257, and Tyr-265; that span reads GS. 2 residues coordinate Mg(2+): His-355 and Asp-357.

The protein belongs to the DSD1 family. As to quaternary structure, homodimer. It depends on pyridoxal 5'-phosphate as a cofactor. Mg(2+) is required as a cofactor.

The catalysed reaction is (3S)-3-hydroxy-D-aspartate = glyoxylate + glycine. The enzyme catalyses (3R)-3-hydroxy-D-aspartate = glyoxylate + glycine. In terms of biological role, catalyzes the condensation of glyoxylate and glycine into (2R,3S)-beta-hydroxyaspartate ((3S)-3-hydroxy-D-aspartate). Is essential for the growth of P.denitrificans in the presence of glycolate and glyoxylate since it functions in glyoxylate assimilation via the beta-hydroxyaspartate cycle (BHAC). Is also able to catalyze the reverse reaction in vitro, i.e. the cleavage of (3S)-3-hydroxy-D-aspartate, and that of D-threonine to a lesser extent. This chain is 3-hydroxy-D-aspartate aldolase, found in Paracoccus denitrificans (strain Pd 1222).